The primary structure comprises 130 residues: MAQVQYYGTGRRKSSVARVRLVPGEGRIIVNNREISEHIPSAALIEDIKQPLTLTETAGTYDVLVNVHGGGFSGQAGAIRHGIARALLEADPEYRSTLKRAGLLTRDARMKERKKYGLKGARRAPQFSKR.

It belongs to the universal ribosomal protein uS9 family.

The sequence is that of Small ribosomal subunit protein uS9 from Bacillus licheniformis (strain ATCC 14580 / DSM 13 / JCM 2505 / CCUG 7422 / NBRC 12200 / NCIMB 9375 / NCTC 10341 / NRRL NRS-1264 / Gibson 46).